The primary structure comprises 499 residues: Protein singed wings 2 (499 aa).

The first 29 residues, 1 to 29 (MPSGVFQKRPKAAETISLFCMILIRLSRA), serve as a signal peptide directing secretion. 2 LRR repeats span residues 154–175 (ELHTINISWTNLSYISSRTFKR) and 178–199 (PLKVLDLRWNQLIQLDGPLLLP). One can recognise an LRRCT 1 domain in the interval 210-265 (NPWNCTRNFKWLLLQPEKGRLVVDRDELICTDRKYKERQMLMVMHYKLELKRQCQS). LRR repeat units follow at residues 307–328 (NTTTLVINDNMISDINPLRDNP), 332–353 (HVVDMQLENNQISNVDNLEDTY), and 357–378 (NFRLLNLRGNNLRKLHVYALDN). The region spanning 394 to 449 (NPWHCTCKFGSRMRELLTKYKDIVRDAWNVSCTYRLDDDQLLAKVLTLSRQEMCNL) is the LRRCT 2 domain.

In terms of biological role, has a role in the ecdysone induced cascade; probably indirect control of 'late' ecdysone genes. This chain is Protein singed wings 2, found in Drosophila melanogaster (Fruit fly).